The following is a 197-amino-acid chain: MAVSPKINRREHILQCLAQMLETSPGQRITTAKLASEVGVSEAALYRHFPSKARMFEGLIEFIEESLLSRINIIMDDEKDTMKRCQLMLQLLLIFAERNPGISRVLNGDALLGENERLRSRISSLFAKIETQLKQILREKTLREGRGFNLDEAILANLLLAFAEGRIAQFVRSEFKLKPTTHFDEQWRFIQHQLLQS.

One can recognise an HTH tetR-type domain in the interval 7 to 67 (INRREHILQC…GLIEFIEESL (61 aa)). Positions 30–49 (TTAKLASEVGVSEAALYRHF) form a DNA-binding region, H-T-H motif. Residues 110–130 (ALLGENERLRSRISSLFAKIE) adopt a coiled-coil conformation.

The protein belongs to the nucleoid occlusion factor SlmA family. As to quaternary structure, homodimer. Interacts with FtsZ.

It localises to the cytoplasm. The protein localises to the nucleoid. Required for nucleoid occlusion (NO) phenomenon, which prevents Z-ring formation and cell division over the nucleoid. Acts as a DNA-associated cell division inhibitor that binds simultaneously chromosomal DNA and FtsZ, and disrupts the assembly of FtsZ polymers. SlmA-DNA-binding sequences (SBS) are dispersed on non-Ter regions of the chromosome, preventing FtsZ polymerization at these regions. This is Nucleoid occlusion factor SlmA from Shewanella sp. (strain W3-18-1).